Here is a 292-residue protein sequence, read N- to C-terminus: Ribosomal RNA small subunit methyltransferase A (292 aa).

Positions 46, 48, 73, 94, 118, and 136 each coordinate S-adenosyl-L-methionine.

The protein belongs to the class I-like SAM-binding methyltransferase superfamily. rRNA adenine N(6)-methyltransferase family. RsmA subfamily.

It is found in the cytoplasm. The enzyme catalyses adenosine(1518)/adenosine(1519) in 16S rRNA + 4 S-adenosyl-L-methionine = N(6)-dimethyladenosine(1518)/N(6)-dimethyladenosine(1519) in 16S rRNA + 4 S-adenosyl-L-homocysteine + 4 H(+). Its function is as follows. Specifically dimethylates two adjacent adenosines (A1518 and A1519) in the loop of a conserved hairpin near the 3'-end of 16S rRNA in the 30S particle. May play a critical role in biogenesis of 30S subunits. This Deinococcus radiodurans (strain ATCC 13939 / DSM 20539 / JCM 16871 / CCUG 27074 / LMG 4051 / NBRC 15346 / NCIMB 9279 / VKM B-1422 / R1) protein is Ribosomal RNA small subunit methyltransferase A.